The following is a 117-amino-acid chain: Immunoglobulin kappa variable 1D-16 (117 aa).

Residues 1-22 form the signal peptide; that stretch reads MDMRVLAQLLGLLLLCFPGARC. A framework-1 region spans residues 23 to 45; that stretch reads DIQMTQSPSSLSASVGDRVTITC. The 94-residue stretch at 24-117 folds into the Ig-like domain; the sequence is IQMTQSPSSL…YYCQQYNSYP (94 aa). Cysteine 45 and cysteine 110 form a disulfide bridge. The segment at 46 to 56 is complementarity-determining-1; that stretch reads RASQGISSWLA. Residues 57-71 are framework-2; sequence WYQQKPEKAPKSLIY. Positions 72–78 are complementarity-determining-2; that stretch reads AASSLQS. The tract at residues 79–110 is framework-3; that stretch reads GVPSRFSGSGSGTDFTLTISSLQPEDFATYYC. Residues 111–117 form a complementarity-determining-3 region; that stretch reads QQYNSYP.

In terms of assembly, immunoglobulins are composed of two identical heavy chains and two identical light chains; disulfide-linked.

It is found in the secreted. The protein resides in the cell membrane. Its function is as follows. V region of the variable domain of immunoglobulin light chains that participates in the antigen recognition. Immunoglobulins, also known as antibodies, are membrane-bound or secreted glycoproteins produced by B lymphocytes. In the recognition phase of humoral immunity, the membrane-bound immunoglobulins serve as receptors which, upon binding of a specific antigen, trigger the clonal expansion and differentiation of B lymphocytes into immunoglobulins-secreting plasma cells. Secreted immunoglobulins mediate the effector phase of humoral immunity, which results in the elimination of bound antigens. The antigen binding site is formed by the variable domain of one heavy chain, together with that of its associated light chain. Thus, each immunoglobulin has two antigen binding sites with remarkable affinity for a particular antigen. The variable domains are assembled by a process called V-(D)-J rearrangement and can then be subjected to somatic hypermutations which, after exposure to antigen and selection, allow affinity maturation for a particular antigen. The chain is Immunoglobulin kappa variable 1D-16 from Homo sapiens (Human).